A 265-amino-acid polypeptide reads, in one-letter code: Hydroxyethylthiazole kinase (265 aa).

A substrate-binding site is contributed by M44. Positions 120 and 166 each coordinate ATP. G193 lines the substrate pocket.

This sequence belongs to the Thz kinase family. Mg(2+) is required as a cofactor.

It catalyses the reaction 5-(2-hydroxyethyl)-4-methylthiazole + ATP = 4-methyl-5-(2-phosphooxyethyl)-thiazole + ADP + H(+). It functions in the pathway cofactor biosynthesis; thiamine diphosphate biosynthesis; 4-methyl-5-(2-phosphoethyl)-thiazole from 5-(2-hydroxyethyl)-4-methylthiazole: step 1/1. Its function is as follows. Catalyzes the phosphorylation of the hydroxyl group of 4-methyl-5-beta-hydroxyethylthiazole (THZ). The protein is Hydroxyethylthiazole kinase of Methanosphaerula palustris (strain ATCC BAA-1556 / DSM 19958 / E1-9c).